A 517-amino-acid chain; its full sequence is Ribose import ATP-binding protein RbsA 2 (517 aa).

2 consecutive ABC transporter domains span residues 10–245 (LRIE…GRSI) and 255–498 (DAGE…VSTH). 42-49 (GENGAGKS) is a binding site for ATP. The interval 497–517 (THTGNSPHSGGTDGTEASRGH) is disordered.

Belongs to the ABC transporter superfamily. Ribose importer (TC 3.A.1.2.1) family. In terms of assembly, the complex is composed of an ATP-binding protein (RbsA), two transmembrane proteins (RbsC) and a solute-binding protein (RbsB).

Its subcellular location is the cell membrane. The enzyme catalyses D-ribose(out) + ATP + H2O = D-ribose(in) + ADP + phosphate + H(+). Its function is as follows. Part of the ABC transporter complex RbsABC involved in ribose import. Responsible for energy coupling to the transport system. In Streptomyces coelicolor (strain ATCC BAA-471 / A3(2) / M145), this protein is Ribose import ATP-binding protein RbsA 2.